A 623-amino-acid polypeptide reads, in one-letter code: V-type proton ATPase catalytic subunit A (623 aa).

Glycine 252–threonine 259 contacts ATP.

It belongs to the ATPase alpha/beta chains family. As to quaternary structure, V-ATPase is a heteromultimeric enzyme composed of a peripheral catalytic V1 complex (main components: subunits A, B, C, D, E, and F) attached to an integral membrane V0 proton pore complex (main component: the proteolipid protein).

It catalyses the reaction ATP + H2O + 4 H(+)(in) = ADP + phosphate + 5 H(+)(out). Its function is as follows. Catalytic subunit of the peripheral V1 complex of vacuolar ATPase. V-ATPase vacuolar ATPase is responsible for acidifying a variety of intracellular compartments in eukaryotic cells. The polypeptide is V-type proton ATPase catalytic subunit A (Citrus unshiu (Satsuma mandarin)).